Consider the following 483-residue polypeptide: Regulatory protein ViaA (483 aa).

The protein belongs to the ViaA family. As to quaternary structure, homodimer. Interacts with RavA.

It localises to the cytoplasm. Component of the RavA-ViaA chaperone complex, which may act on the membrane to optimize the function of some of the respiratory chains. ViaA stimulates the ATPase activity of RavA. The polypeptide is Regulatory protein ViaA (Enterobacter sp. (strain 638)).